A 372-amino-acid chain; its full sequence is Putative glutamate--cysteine ligase 2 (372 aa).

Belongs to the glutamate--cysteine ligase type 2 family. YbdK subfamily. In terms of assembly, homodimer.

It catalyses the reaction L-cysteine + L-glutamate + ATP = gamma-L-glutamyl-L-cysteine + ADP + phosphate + H(+). In terms of biological role, ATP-dependent carboxylate-amine ligase which exhibits weak glutamate--cysteine ligase activity. The chain is Putative glutamate--cysteine ligase 2 (ybdK) from Salmonella agona (strain SL483).